Here is a 349-residue protein sequence, read N- to C-terminus: Glycosyltransferase 8 domain-containing protein 2 (349 aa).

Residues 1 to 6 (MALLRK) are Cytoplasmic-facing. Residues 7–24 (INQVLLFLLIVTLCVILY) traverse the membrane as a helical; Signal-anchor for type II membrane protein segment. The Lumenal portion of the chain corresponds to 25–349 (KKVHKGTVSK…AGIFKLNHHS (325 aa)). N-linked (GlcNAc...) asparagine glycosylation is present at Asn-234.

It belongs to the glycosyltransferase 8 family.

It is found in the membrane. This chain is Glycosyltransferase 8 domain-containing protein 2 (GLT8D2), found in Macaca fascicularis (Crab-eating macaque).